Reading from the N-terminus, the 514-residue chain is ATP synthase subunit alpha (514 aa).

170 to 177 (GDRQIGKT) is a binding site for ATP.

It belongs to the ATPase alpha/beta chains family. As to quaternary structure, F-type ATPases have 2 components, CF(1) - the catalytic core - and CF(0) - the membrane proton channel. CF(1) has five subunits: alpha(3), beta(3), gamma(1), delta(1), epsilon(1). CF(0) has three main subunits: a(1), b(2) and c(9-12). The alpha and beta chains form an alternating ring which encloses part of the gamma chain. CF(1) is attached to CF(0) by a central stalk formed by the gamma and epsilon chains, while a peripheral stalk is formed by the delta and b chains.

The protein resides in the cell inner membrane. The enzyme catalyses ATP + H2O + 4 H(+)(in) = ADP + phosphate + 5 H(+)(out). Functionally, produces ATP from ADP in the presence of a proton gradient across the membrane. The alpha chain is a regulatory subunit. The sequence is that of ATP synthase subunit alpha from Pseudomonas fluorescens (strain Pf0-1).